The following is a 548-amino-acid chain: Membrane protein insertase YidC (548 aa).

Residues 6–26 (NLFLIAFLFVSFMIWQAWQTD) form a helical membrane-spanning segment. The tract at residues 30-53 (QPLQTQTTQNTTSAAGDAVNQGVP) is disordered. Transmembrane regions (helical) follow at residues 345–365 (KFLHGFIGNWGFSIIVITFIV), 420–440 (LGGCLPLVIQMPIFLALYYML), 458–478 (LAAQDPYYILPILMGVTMFFI), and 499–519 (PVIFTVFFLWFPSGLVLYYIV).

Belongs to the OXA1/ALB3/YidC family. Type 1 subfamily. In terms of assembly, interacts with the Sec translocase complex via SecD. Specifically interacts with transmembrane segments of nascent integral membrane proteins during membrane integration.

It localises to the cell inner membrane. Functionally, required for the insertion and/or proper folding and/or complex formation of integral membrane proteins into the membrane. Involved in integration of membrane proteins that insert both dependently and independently of the Sec translocase complex, as well as at least some lipoproteins. Aids folding of multispanning membrane proteins. The chain is Membrane protein insertase YidC from Erwinia tasmaniensis (strain DSM 17950 / CFBP 7177 / CIP 109463 / NCPPB 4357 / Et1/99).